The primary structure comprises 475 residues: MHETTLKREGASTPSNPTPSTHAAGSGKIYIRTFGCQMNEYDSDKMVDVLREDQGLEMTDNPEEADVILFNTCSVREKAQEKVFSDLGRVQHLKKLNPNLVIGVGGCVASQEGAAIVKRAPYVDVVFGPQTLHRLPELIRRRRDEGVSQVDISFPEIEKFDNMPPSRVEGATAFVSIMEGCSKYCSFCVVPYTRGEEVSRPFEDVLTEVADLADQGVREVTLLGQNVNAYRGRIEGSDEIADFAMLLEYVHEIPGIERIRYTTSHPKEMTQRMVEAYARLPKLVSFLHLPVQAGSDRVLAAMKRGYTALEFKSVVRKLRAARPNLTLSSDFIVGFPGETEEDFQKTMKLIADVGFDTSFSFVYSRRPGTPAADLQDDTPQDVKLKRLQQLQALINEQAAAIAQSMVGTRQRLLVEGPSRRDPNELMGRTENNRIVNFEGPSRLIGNMVDVIITHAFTNSLRGRVAGTEESDQGAA.

A compositionally biased stretch (basic and acidic residues) spans 1–10 (MHETTLKREG). The interval 1 to 25 (MHETTLKREGASTPSNPTPSTHAAG) is disordered. A compositionally biased stretch (polar residues) spans 12–23 (STPSNPTPSTHA). An MTTase N-terminal domain is found at 27–144 (GKIYIRTFGC…LPELIRRRRD (118 aa)). Residues Cys-36, Cys-73, Cys-107, Cys-181, Cys-185, and Cys-188 each contribute to the [4Fe-4S] cluster site. Positions 167-400 (RVEGATAFVS…QALINEQAAA (234 aa)) constitute a Radical SAM core domain. The TRAM domain occupies 403 to 466 (QSMVGTRQRL…TNSLRGRVAG (64 aa)).

Belongs to the methylthiotransferase family. MiaB subfamily. Monomer. It depends on [4Fe-4S] cluster as a cofactor.

It localises to the cytoplasm. It catalyses the reaction N(6)-dimethylallyladenosine(37) in tRNA + (sulfur carrier)-SH + AH2 + 2 S-adenosyl-L-methionine = 2-methylsulfanyl-N(6)-dimethylallyladenosine(37) in tRNA + (sulfur carrier)-H + 5'-deoxyadenosine + L-methionine + A + S-adenosyl-L-homocysteine + 2 H(+). In terms of biological role, catalyzes the methylthiolation of N6-(dimethylallyl)adenosine (i(6)A), leading to the formation of 2-methylthio-N6-(dimethylallyl)adenosine (ms(2)i(6)A) at position 37 in tRNAs that read codons beginning with uridine. This is tRNA-2-methylthio-N(6)-dimethylallyladenosine synthase from Bordetella avium (strain 197N).